The sequence spans 551 residues: Protein PNS1 (551 aa).

Positions 1-72 (MSAQEFYQGG…TGGQPVYQDT (72 aa)) are disordered. The Cytoplasmic portion of the chain corresponds to 1-94 (MSAQEFYQGG…RMNPRKRVND (94 aa)). Low complexity predominate over residues 8–19 (QGGNQRGYQQQQ). Residues 45-63 (PPNYNMKPSQPYASTNPET) are compositionally biased toward polar residues. Residues 95-115 (IIPLILFIAAVVGFAVVSGIA) form a helical membrane-spanning segment. The Extracellular segment spans residues 116–147 (IHGFVQVNGLGGGMGDSSIGRTGSSITLDYHT). Residues 148 to 168 (VYLLLVVVALGLVIASLYLAA) form a helical membrane-spanning segment. Topologically, residues 169-177 (LRAFTKIIL) are cytoplasmic. The chain crosses the membrane as a helical span at residues 178–198 (EVTLALTVILNIGICIYYFII). Over 199–200 (QY) the chain is Extracellular. A helical transmembrane segment spans residues 201-221 (WSGAIIFLIIALVSVFFYWGM). The Cytoplasmic portion of the chain corresponds to 222 to 244 (RKRIPLAKLLLQTTIDVTKHHPS). Residues 245–265 (VYVVVFIGLIIQAAVSVWYTF) traverse the membrane as a helical segment. The Extracellular portion of the chain corresponds to 266-307 (TCIAIYVKWTPGSAACSDGGCSSSKVAGLVFYATFSYLWLSQ). A helical membrane pass occupies residues 308–328 (VIGNVILCTLAGGVFGGWYYY). The Cytoplasmic segment spans residues 329–356 (GPRTPGGGVPKRASLLAFVRASTLSLGS). Residues 357–377 (IAFGSLLVTILELLRLILQLF) traverse the membrane as a helical segment. The Extracellular segment spans residues 378 to 386 (RQYEAGQGD). The chain crosses the membrane as a helical span at residues 387–407 (MIGSILICIAQCCIGCIQWMV). Residues 408–452 (EYFNKYAYIEIALYGKSYIPAAKDTWRLLKDRGIDALVNDSLVGT) lie on the Cytoplasmic side of the membrane. A helical transmembrane segment spans residues 453 to 473 (ALMWGAYINGFLCAVLGYFYL). The Extracellular segment spans residues 474 to 488 (RFTHPAYNSDGQYSA). Residues 489 to 509 (PVILFSFLIGLNESFTVGSAI) traverse the membrane as a helical segment. Topologically, residues 510–551 (DAGVSTIFVGLGEDPMVLAERSPGLFEMIRQVYPRVVQGVPH) are cytoplasmic.

It belongs to the CTL (choline transporter-like) family.

The protein resides in the cell membrane. Functionally, probably involved in transport through the plasma membrane. In Cryptococcus neoformans var. neoformans serotype D (strain B-3501A) (Filobasidiella neoformans), this protein is Protein PNS1 (PNS1).